The chain runs to 712 residues: Ribosomal RNA large subunit methyltransferase K/L (712 aa).

A THUMP domain is found at 43 to 154 (TAYRCCLWTR…GEKGVLGLDM (112 aa)).

This sequence belongs to the methyltransferase superfamily. RlmKL family.

It localises to the cytoplasm. The catalysed reaction is guanosine(2445) in 23S rRNA + S-adenosyl-L-methionine = N(2)-methylguanosine(2445) in 23S rRNA + S-adenosyl-L-homocysteine + H(+). It catalyses the reaction guanosine(2069) in 23S rRNA + S-adenosyl-L-methionine = N(2)-methylguanosine(2069) in 23S rRNA + S-adenosyl-L-homocysteine + H(+). Functionally, specifically methylates the guanine in position 2445 (m2G2445) and the guanine in position 2069 (m7G2069) of 23S rRNA. The protein is Ribosomal RNA large subunit methyltransferase K/L of Photobacterium profundum (strain SS9).